The primary structure comprises 338 residues: Tagatose 1,6-diphosphate aldolase (338 aa).

This sequence belongs to the aldolase LacD family.

It catalyses the reaction D-tagatofuranose 1,6-bisphosphate = D-glyceraldehyde 3-phosphate + dihydroxyacetone phosphate. It functions in the pathway carbohydrate metabolism; D-tagatose 6-phosphate degradation; D-glyceraldehyde 3-phosphate and glycerone phosphate from D-tagatose 6-phosphate: step 2/2. The chain is Tagatose 1,6-diphosphate aldolase from Listeria monocytogenes serotype 4b (strain CLIP80459).